The primary structure comprises 218 residues: Response regulator UvrY (218 aa).

A Response regulatory domain is found at 3-119 (NVLLVDDHEL…EVVSAIRSVY (117 aa)). A 4-aspartylphosphate modification is found at Asp-54. Residues 143–208 (TESPFASLSE…ELTHLAIRHG (66 aa)) enclose the HTH luxR-type domain. A DNA-binding region (H-T-H motif) is located at residues 167 to 186 (VNEISEQLNLSPKTVNSYRY).

In terms of processing, phosphorylated and activated by BarA.

The protein localises to the cytoplasm. Member of the two-component regulatory system UvrY/BarA involved in the regulation of carbon metabolism via the CsrA/CsrB regulatory system. UvrY activates the transcription of the untranslated csrB RNA and of barA, in an autoregulatory loop. Mediates the effects of CsrA on csrB RNA by BarA-dependent and BarA-independent mechanisms. This Escherichia coli (strain K12) protein is Response regulator UvrY (uvrY).